The primary structure comprises 275 residues: uncharacterized protein (275 aa).

Helical transmembrane passes span leucine 25–alanine 45, leucine 70–isoleucine 90, isoleucine 107–valine 127, phenylalanine 149–phenylalanine 169, isoleucine 203–alanine 223, and isoleucine 247–isoleucine 267.

The protein resides in the cell membrane. This is an uncharacterized protein from Bacillus subtilis (strain 168).